Consider the following 408-residue polypeptide: GTPase Obg (408 aa).

Residues 1–159 (MKFFDEARIE…RNLHLELKVL (159 aa)) enclose the Obg domain. The OBG-type G domain maps to 160 to 334 (ADVGLLGMPN…LIFALQDFLD (175 aa)). Residues 166–173 (GMPNAGKS), 191–195 (FTTLQ), 213–216 (DIPG), 284–287 (NKLD), and 315–317 (SAL) each bind GTP. Residues Ser173 and Thr193 each coordinate Mg(2+). The interval 385–408 (AEDALAEDALDDDADGEDADPNAR) is disordered.

This sequence belongs to the TRAFAC class OBG-HflX-like GTPase superfamily. OBG GTPase family. In terms of assembly, monomer. Mg(2+) is required as a cofactor.

The protein localises to the cytoplasm. In terms of biological role, an essential GTPase which binds GTP, GDP and possibly (p)ppGpp with moderate affinity, with high nucleotide exchange rates and a fairly low GTP hydrolysis rate. Plays a role in control of the cell cycle, stress response, ribosome biogenesis and in those bacteria that undergo differentiation, in morphogenesis control. The sequence is that of GTPase Obg from Azoarcus sp. (strain BH72).